Here is a 75-residue protein sequence, read N- to C-terminus: Sec-independent protein translocase protein TatA (75 aa).

A helical membrane pass occupies residues 1-21; sequence MFGLSPAQLIILLVVILLIFG.

This sequence belongs to the TatA/E family. In terms of assembly, the Tat system comprises two distinct complexes: a TatABC complex, containing multiple copies of TatA, TatB and TatC subunits, and a separate TatA complex, containing only TatA subunits. Substrates initially bind to the TatABC complex, which probably triggers association of the separate TatA complex to form the active translocon.

The protein resides in the cell inner membrane. Part of the twin-arginine translocation (Tat) system that transports large folded proteins containing a characteristic twin-arginine motif in their signal peptide across membranes. TatA could form the protein-conducting channel of the Tat system. The polypeptide is Sec-independent protein translocase protein TatA (Haemophilus influenzae (strain PittEE)).